We begin with the raw amino-acid sequence, 274 residues long: Large ribosomal subunit protein uL2cz/uL2cy (274 aa).

Disordered regions lie at residues 1-26 and 223-274; these read MAIH…KSNP and MNPV…RRSK.

The protein belongs to the universal ribosomal protein uL2 family. In terms of assembly, part of the 50S ribosomal subunit.

It is found in the plastid. Its subcellular location is the chloroplast. The polypeptide is Large ribosomal subunit protein uL2cz/uL2cy (rpl2-A) (Daucus carota (Wild carrot)).